The primary structure comprises 307 residues: Protoheme IX farnesyltransferase (307 aa).

Transmembrane regions (helical) follow at residues 31–51 (VMSL…YSVH), 52–72 (PFIA…AGAI), 102–119 (ALSF…FMAL), 123–145 (LLAS…IWLK), 151–171 (NIVI…AAVS), 179–199 (VILF…LALF), 225–245 (ILIY…IGMS), 247–267 (FIYL…AGSL), and 281–301 (FVYS…TNTI).

The protein belongs to the UbiA prenyltransferase family. Protoheme IX farnesyltransferase subfamily.

It localises to the cell inner membrane. The enzyme catalyses heme b + (2E,6E)-farnesyl diphosphate + H2O = Fe(II)-heme o + diphosphate. It participates in porphyrin-containing compound metabolism; heme O biosynthesis; heme O from protoheme: step 1/1. Its function is as follows. Converts heme B (protoheme IX) to heme O by substitution of the vinyl group on carbon 2 of heme B porphyrin ring with a hydroxyethyl farnesyl side group. The chain is Protoheme IX farnesyltransferase from Rickettsia canadensis (strain McKiel).